A 243-amino-acid chain; its full sequence is Carboxy-S-adenosyl-L-methionine synthase (243 aa).

Residues Tyr-39, 64–66 (GCS), 90–91 (DN), 118–119 (DL), Asn-133, and Arg-200 each bind S-adenosyl-L-methionine.

It belongs to the class I-like SAM-binding methyltransferase superfamily. Cx-SAM synthase family. In terms of assembly, homodimer.

The catalysed reaction is prephenate + S-adenosyl-L-methionine = carboxy-S-adenosyl-L-methionine + 3-phenylpyruvate + H2O. Catalyzes the conversion of S-adenosyl-L-methionine (SAM) to carboxy-S-adenosyl-L-methionine (Cx-SAM). The protein is Carboxy-S-adenosyl-L-methionine synthase of Idiomarina loihiensis (strain ATCC BAA-735 / DSM 15497 / L2-TR).